A 637-amino-acid chain; its full sequence is Poly(A) polymerase beta (637 aa).

Over residues 1 to 10 (MMPFPVTTQG) the composition is skewed to low complexity. A disordered region spans residues 1–23 (MMPFPVTTQGPPQPAPPPNRYGV). Residues 101 to 103 (FGS), T110, 114 to 116 (DID), D168, K229, Y238, and 247 to 248 (GV) each bind ATP. Positions 114, 116, and 168 each coordinate Mg(2+). A disordered region spans residues 535–555 (SVPSSTSTMKTGPLISSSQGR).

Belongs to the poly(A) polymerase family. In terms of assembly, interacts with GSG1. The cofactor is Mg(2+). Mn(2+) is required as a cofactor. As to expression, testis specific.

It is found in the nucleus. It carries out the reaction RNA(n) + ATP = RNA(n)-3'-adenine ribonucleotide + diphosphate. In Homo sapiens (Human), this protein is Poly(A) polymerase beta.